Reading from the N-terminus, the 114-residue chain is Macrophage migration inhibitory factor homolog (114 aa).

The active-site Proton acceptor; via imino nitrogen is proline 2. Substrate is bound by residues lysine 33 and isoleucine 65.

The protein belongs to the MIF family.

It is found in the secreted. It carries out the reaction L-dopachrome = 5,6-dihydroxyindole-2-carboxylate. It catalyses the reaction 3-phenylpyruvate = enol-phenylpyruvate. Tautomerization of the methyl ester of L-dopachrome. Inhibits migration of human peripheral blood mononuclear cells. In Trichinella spiralis (Trichina worm), this protein is Macrophage migration inhibitory factor homolog.